We begin with the raw amino-acid sequence, 277 residues long: Protein CUSTOS (277 aa).

3 disordered regions span residues 1–81 (MVAP…QTTP), 108–182 (TQQA…QRCR), and 238–277 (SVNG…EPKN). Low complexity predominate over residues 9-18 (SDSESSSSDS). Phosphoserine is present on Ser62. The span at 63 to 72 (RRREVNQHDE) shows a compositional bias: basic and acidic residues. At Thr80 the chain carries Phosphothreonine. Positions 106 to 141 (KKTQQARLQQEAKEQQEAKEQQAAKEEQAAKKEEDG) form a coiled coil. Basic and acidic residues predominate over residues 115 to 142 (QEAKEQQEAKEQQAAKEEQAAKKEEDGF). A phosphoserine mark is found at Ser158 and Ser238. The span at 248–258 (TKKKKKKKAKK) shows a compositional bias: basic residues. Positions 249-256 (KKKKKKKA) match the Nucleolar localization signal (NLS) motif. Residues 265-277 (CPPAECAAAEPKN) show a composition bias toward low complexity.

The protein belongs to the CUSTOS family.

It is found in the nucleus envelope. Plays a role in the regulation of Wnt signaling pathway during early development. The chain is Protein CUSTOS from Rattus norvegicus (Rat).